We begin with the raw amino-acid sequence, 691 residues long: DNA ligase (691 aa).

NAD(+) contacts are provided by residues 41 to 45 (DAEYD), 90 to 91 (SL), and glutamate 130. Lysine 132 (N6-AMP-lysine intermediate) is an active-site residue. NAD(+) contacts are provided by arginine 153, glutamate 190, lysine 307, and lysine 331. Positions 425, 428, 443, and 449 each coordinate Zn(2+). The BRCT domain maps to 610-691 (APQGVLAGKT…MHTLLEGHAR (82 aa)).

It belongs to the NAD-dependent DNA ligase family. LigA subfamily. Mg(2+) is required as a cofactor. Requires Mn(2+) as cofactor.

It catalyses the reaction NAD(+) + (deoxyribonucleotide)n-3'-hydroxyl + 5'-phospho-(deoxyribonucleotide)m = (deoxyribonucleotide)n+m + AMP + beta-nicotinamide D-nucleotide.. DNA ligase that catalyzes the formation of phosphodiester linkages between 5'-phosphoryl and 3'-hydroxyl groups in double-stranded DNA using NAD as a coenzyme and as the energy source for the reaction. It is essential for DNA replication and repair of damaged DNA. The protein is DNA ligase of Burkholderia pseudomallei (strain 668).